Here is a 227-residue protein sequence, read N- to C-terminus: Extracellular deoxyribonuclease (227 aa).

An N-terminal signal peptide occupies residues 1–20; it reads MFRPLLSFTLARLVSLPLHA.

This sequence belongs to the EndA/NucM nuclease family.

It is found in the secreted. The polypeptide is Extracellular deoxyribonuclease (Aeromonas hydrophila).